Here is a 123-residue protein sequence, read N- to C-terminus: Basic myotoxic phospholipase A2 PhTX-II (123 aa).

Intrachain disulfides connect cysteine 26/cysteine 116, cysteine 28/cysteine 45, cysteine 44/cysteine 95, cysteine 50/cysteine 123, cysteine 51/cysteine 88, cysteine 58/cysteine 81, and cysteine 75/cysteine 86. 3 residues coordinate Ca(2+): tyrosine 27, glycine 29, and glycine 31. Histidine 48 is a catalytic residue. Aspartate 49 serves as a coordination point for Ca(2+). Aspartate 89 is an active-site residue.

In terms of assembly, monomer. Ca(2+) serves as cofactor. In terms of tissue distribution, expressed by the venom gland.

It is found in the secreted. It carries out the reaction a 1,2-diacyl-sn-glycero-3-phosphocholine + H2O = a 1-acyl-sn-glycero-3-phosphocholine + a fatty acid + H(+). P-bromophenacyl bromide (BPB) completely inhibits the catalytic and edematogenic activities. Enzymatic activity is also diminished by EDTA, heparin and crotapotins F2 and F3 from C.d.collilineatus. Inhibited by divalent cations different from calcium ions (cadmium, magnesium, manganese, zinc), since they act as competitive antagonists of this cofactor. Functionally, snake venom phospholipase A2 (PLA2) that induces myotoxicity and local edema in mice. In addition, it causes neuromuscular blockade in avian neuromuscular preparations with a significant direct action on skeletal muscle function. Myotoxic action is exerted by both enzymatic and non-enzymatic mechanisms. PLA2 catalyzes the calcium-dependent hydrolysis of the 2-acyl groups in 3-sn-phosphoglycerides. This Bothrocophias hyoprora (Amazonian hognose viper) protein is Basic myotoxic phospholipase A2 PhTX-II.